A 169-amino-acid chain; its full sequence is uncharacterized protein (169 aa).

This is an uncharacterized protein from Mycoplasma genitalium (strain ATCC 33530 / DSM 19775 / NCTC 10195 / G37) (Mycoplasmoides genitalium).